Reading from the N-terminus, the 450-residue chain is Phosphoglucosamine mutase (450 aa).

The Phosphoserine intermediate role is filled by Ser-101. The Mg(2+) site is built by Ser-101, Asp-242, Asp-244, and Asp-246. Ser-101 is subject to Phosphoserine.

The protein belongs to the phosphohexose mutase family. Mg(2+) is required as a cofactor. Activated by phosphorylation.

It catalyses the reaction alpha-D-glucosamine 1-phosphate = D-glucosamine 6-phosphate. Catalyzes the conversion of glucosamine-6-phosphate to glucosamine-1-phosphate. This chain is Phosphoglucosamine mutase, found in Rhodopseudomonas palustris (strain HaA2).